The chain runs to 188 residues: Putative manganese efflux pump MntP (188 aa).

The next 6 helical transmembrane spans lie at 3-23 (FYAL…VALA), 35-55 (IAAT…AGWV), 63-83 (FISE…GLKM), 107-127 (VLTA…LAFM), 131-151 (IAFA…VGLA), and 167-187 (AGGL…LGLI).

The protein belongs to the MntP (TC 9.B.29) family.

The protein resides in the cell inner membrane. Functionally, probably functions as a manganese efflux pump. The protein is Putative manganese efflux pump MntP of Neisseria meningitidis serogroup A / serotype 4A (strain DSM 15465 / Z2491).